The primary structure comprises 445 residues: Cyclic GMP-AMP phosphodiesterase SMPDL3A (445 aa).

The first 22 residues, 1–22, serve as a signal peptide directing secretion; sequence MALLGNFLCCLLVAWLCGPGLG. Residues D42 and H44 each contribute to the Zn(2+) site. Residues C59 and C78 are joined by a disulfide bond. N66 is a glycosylation site (N-linked (GlcNAc...) asparagine). A Zn(2+)-binding site is contributed by D107. H111 lines the ATP pocket. The N-linked (GlcNAc...) asparagine glycan is linked to N128. N148 lines the Zn(2+) pocket. N148 and H149 together coordinate ATP. Residues N219 and N235 are each glycosylated (N-linked (GlcNAc...) asparagine). H249 contacts Zn(2+). An ATP-binding site is contributed by Y257. The Zn(2+) site is built by H290 and H292. 2 N-linked (GlcNAc...) asparagine glycosylation sites follow: N353 and N364. Cystine bridges form between C417–C421 and C427–C440.

The protein belongs to the acid sphingomyelinase family. Monomer. Homodimer; homodimerizes following 2',3'-cGAMP-binding. Zn(2+) is required as a cofactor. Post-translationally, N-glycosylated. Detected in blood serum (at protein level).

The protein localises to the secreted. The enzyme catalyses 2',3'-cGAMP + H2O = 5'-pGpA(2'-5') + H(+). It carries out the reaction 5'-pGpA(2'-5') + H2O = 5'-GpA(2'-5') + phosphate. The catalysed reaction is a ribonucleoside 5'-triphosphate + H2O = a ribonucleoside 5'-diphosphate + phosphate + H(+). It catalyses the reaction ATP + H2O = ADP + phosphate + H(+). Requires micromolar levels of Zn(2+) for activity. Inhibited by millimolar levels of Zn(2+). Functionally, cyclic-nucleotide phosphodiesterase that acts as a negative regulator of innate immunity by mediating degradation of 2',3'-cGAMP, thereby inhibiting the cGAS-STING signaling. Specifically linearizes 2',3'-cGAMP into 2'5'-bond pGpA and further hydrolyzes pGpA to produce GpA. Also has in vitro nucleotide phosphodiesterase activity with nucleoside triphosphates, such as ATP. Has in vitro activity with p-nitrophenyl-TMP. Has lower activity with nucleoside diphosphates, and no activity with nucleoside monophosphates. Has in vitro activity with CDP-choline, giving rise to CMP and phosphocholine. Has in vitro activity with CDP-ethanolamine. Does not have sphingomyelin phosphodiesterase activity. This is Cyclic GMP-AMP phosphodiesterase SMPDL3A from Mus musculus (Mouse).